A 122-amino-acid polypeptide reads, in one-letter code: Large ribosomal subunit protein uL14 (122 aa).

This sequence belongs to the universal ribosomal protein uL14 family. Part of the 50S ribosomal subunit. Forms a cluster with proteins L3 and L19. In the 70S ribosome, L14 and L19 interact and together make contacts with the 16S rRNA in bridges B5 and B8.

Functionally, binds to 23S rRNA. Forms part of two intersubunit bridges in the 70S ribosome. This chain is Large ribosomal subunit protein uL14, found in Pelobacter propionicus (strain DSM 2379 / NBRC 103807 / OttBd1).